A 184-amino-acid chain; its full sequence is Oligoribonuclease (184 aa).

Residues 8 to 171 (LIWIDLEMTG…DDIRESIAEL (164 aa)) form the Exonuclease domain. Tyr129 is a catalytic residue.

Belongs to the oligoribonuclease family.

It is found in the cytoplasm. Its function is as follows. 3'-to-5' exoribonuclease specific for small oligoribonucleotides. The chain is Oligoribonuclease from Pasteurella multocida (strain Pm70).